Here is a 103-residue protein sequence, read N- to C-terminus: Large ribosomal subunit protein bL21 (103 aa).

It belongs to the bacterial ribosomal protein bL21 family. Part of the 50S ribosomal subunit. Contacts protein L20.

This protein binds to 23S rRNA in the presence of protein L20. The chain is Large ribosomal subunit protein bL21 from Methylococcus capsulatus (strain ATCC 33009 / NCIMB 11132 / Bath).